The sequence spans 37 residues: Large ribosomal subunit protein bL36 (37 aa).

Belongs to the bacterial ribosomal protein bL36 family.

The chain is Large ribosomal subunit protein bL36 from Endomicrobium trichonymphae.